A 395-amino-acid chain; its full sequence is Accessory Sec system protein translocase subunit SecY2 (395 aa).

Transmembrane regions (helical) follow at residues 13 to 33 (VSFS…PLPF), 63 to 83 (ISIF…IQLL), 102 to 122 (LMQF…VFAF), 128 to 148 (GLED…VVWL), 157 to 177 (VGAS…PNII), 190 to 210 (WIWL…WLAF), 239 to 259 (MAAM…LMVG), 272 to 292 (VFQA…FTFV), 326 to 346 (LIWI…VFGL), and 355 to 375 (YAGF…MGGI).

Belongs to the SecY/SEC61-alpha family. SecY2 subfamily. As to quaternary structure, component of the accessory SecA2/SecY2 protein translocase complex required to export cell wall proteins. May form heterotrimers with SecE and SecG subunits.

It is found in the cell membrane. Its function is as follows. Part of the accessory SecA2/SecY2 system specifically required for export of possible cell wall proteins. The central subunit of a protein translocation channel. The polypeptide is Accessory Sec system protein translocase subunit SecY2 (Lactobacillus johnsonii (strain CNCM I-12250 / La1 / NCC 533)).